Here is a 652-residue protein sequence, read N- to C-terminus: Acetyl-coenzyme A synthetase (652 aa).

Residues 191–194, Thr311, and Asn335 each bind CoA; that span reads RAGR. ATP-binding positions include 387–389, 411–416, Asp500, and Arg515; these read GEP and DTWWQT. Ser523 contacts CoA. ATP is bound at residue Arg526. Mg(2+) is bound by residues Val537, His539, and Ile542. Position 584 (Arg584) interacts with CoA. Residue Lys609 is modified to N6-acetyllysine.

The protein belongs to the ATP-dependent AMP-binding enzyme family. It depends on Mg(2+) as a cofactor. Post-translationally, acetylated. Deacetylation by the SIR2-homolog deacetylase activates the enzyme.

It catalyses the reaction acetate + ATP + CoA = acetyl-CoA + AMP + diphosphate. Its function is as follows. Catalyzes the conversion of acetate into acetyl-CoA (AcCoA), an essential intermediate at the junction of anabolic and catabolic pathways. Acs undergoes a two-step reaction. In the first half reaction, Acs combines acetate with ATP to form acetyl-adenylate (AcAMP) intermediate. In the second half reaction, it can then transfer the acetyl group from AcAMP to the sulfhydryl group of CoA, forming the product AcCoA. Enables the cell to use acetate during aerobic growth to generate energy via the TCA cycle, and biosynthetic compounds via the glyoxylate shunt. Acetylates CheY, the response regulator involved in flagellar movement and chemotaxis. In Yersinia pestis, this protein is Acetyl-coenzyme A synthetase.